A 442-amino-acid chain; its full sequence is D(2) dopamine receptor A (442 aa).

The Extracellular portion of the chain corresponds to 1-31; sequence MDPQNLSMYNDDINNGTNGTAVDQKPHYNYY. N-linked (GlcNAc...) asparagine glycans are attached at residues Asn5, Asn15, and Asn18. A helical membrane pass occupies residues 32–54; that stretch reads AMLLTLLVFVIVFGNVLVCIAVS. Residues 55–64 are Cytoplasmic-facing; the sequence is REKALQTTTN. A helical membrane pass occupies residues 65 to 87; it reads YLIVSLAVADLLVATLVMPWAVY. Over 88 to 102 the chain is Extracellular; it reads MEVVGEWRFSRIHCD. Cys101 and Cys176 are joined by a disulfide. A helical transmembrane segment spans residues 103–124; sequence IFVTLDVMMCTASILNLCAISI. At 125-145 the chain is on the cytoplasmic side; that stretch reads DRYTAVAMPMLYNTRYSSKRR. Residues 146–166 traverse the membrane as a helical segment; it reads VTVMISVVWVLSFAISCPLLF. Over 167–182 the chain is Extracellular; the sequence is GLNNTGSKVCIIDNPA. Residues 183-207 form a helical membrane-spanning segment; the sequence is FVIYSSIVSFYVPFIVTLLVYVQIY. Residues 208-372 lie on the Cytoplasmic side of the membrane; it reads IVLRKRRKRV…SQHKEKKATQ (165 aa). The tract at residues 273–335 is disordered; sequence DMEMEMMSST…KNGHPKDSTK (63 aa). Polar residues predominate over residues 304 to 318; that stretch reads ATSNQCKNASLTSPV. Positions 322 to 335 are enriched in basic and acidic residues; that stretch reads YKAEKNGHPKDSTK. A helical membrane pass occupies residues 373–394; it reads MLAIVLGVFIICWLPFFIIHIL. The Extracellular portion of the chain corresponds to 395–408; that stretch reads NMHCNCNIPQALYS. A disulfide bridge links Cys398 with Cys400. The chain crosses the membrane as a helical span at residues 409 to 430; the sequence is AFTWLGYVNSAVNPIIYTTFNV. Over 431 to 442 the chain is Cytoplasmic; sequence EFRKAFIKILHC. A lipid anchor (S-palmitoyl cysteine) is attached at Cys442.

The protein belongs to the G-protein coupled receptor 1 family. Post-translationally, palmitoylated. Palmitoylation is probably required for proper localization to the plasma membrane and stability of the receptor. Brain; pituitary.

It is found in the cell membrane. It localises to the golgi apparatus membrane. Its function is as follows. This is one of the five types (D1 to D5) of receptors for dopamine. The activity of this receptor is mediated by G proteins which inhibits adenylyl cyclase. In Xenopus D2R is involved in the regulation of the melanotrope cells of the intermediate pituitary during background adaptation of the animal. The protein is D(2) dopamine receptor A (drd2-a) of Xenopus laevis (African clawed frog).